Consider the following 81-residue polypeptide: MPNIKSQKKRVLTNEKSRASNKAIKSEIRTAIKKALAAKKDEATDATDLINHAVSLVDKGVKKGILKPNKAAREKSRLMQA.

The segment covering 1 to 11 has biased composition (basic residues); that stretch reads MPNIKSQKKRV. The disordered stretch occupies residues 1–20; it reads MPNIKSQKKRVLTNEKSRAS.

The protein belongs to the bacterial ribosomal protein bS20 family.

Binds directly to 16S ribosomal RNA. The polypeptide is Small ribosomal subunit protein bS20 (Mesoplasma florum (strain ATCC 33453 / NBRC 100688 / NCTC 11704 / L1) (Acholeplasma florum)).